An 80-amino-acid polypeptide reads, in one-letter code: UPF0248 protein M1425_2629 (80 aa).

This sequence belongs to the UPF0248 family.

In Saccharolobus islandicus (strain M.14.25 / Kamchatka #1) (Sulfolobus islandicus), this protein is UPF0248 protein M1425_2629.